Reading from the N-terminus, the 137-residue chain is Nucleoside diphosphate kinase (137 aa).

Residues K9, F57, R85, T91, R102, and N112 each contribute to the ATP site. Catalysis depends on H115, which acts as the Pros-phosphohistidine intermediate.

The protein belongs to the NDK family. In terms of assembly, homotetramer. Mg(2+) serves as cofactor.

It is found in the cytoplasm. It carries out the reaction a 2'-deoxyribonucleoside 5'-diphosphate + ATP = a 2'-deoxyribonucleoside 5'-triphosphate + ADP. It catalyses the reaction a ribonucleoside 5'-diphosphate + ATP = a ribonucleoside 5'-triphosphate + ADP. In terms of biological role, major role in the synthesis of nucleoside triphosphates other than ATP. The ATP gamma phosphate is transferred to the NDP beta phosphate via a ping-pong mechanism, using a phosphorylated active-site intermediate. The protein is Nucleoside diphosphate kinase of Nitratiruptor sp. (strain SB155-2).